The primary structure comprises 939 residues: Protein translocase subunit SecA (939 aa).

ATP is bound by residues Gln-85, 103–107 (GEGKT), and Asp-504. A disordered region spans residues 850–939 (PVQDGAERPS…KGGGGRRRKK (90 aa)). The segment covering 854–864 (GAERPSLEKEG) has biased composition (basic and acidic residues). Basic residues predominate over residues 924 to 939 (ERRKAQKGGGGRRRKK).

It belongs to the SecA family. In terms of assembly, monomer and homodimer. Part of the essential Sec protein translocation apparatus which comprises SecA, SecYEG and auxiliary proteins SecDF. Other proteins may also be involved.

It localises to the cell membrane. The protein resides in the cytoplasm. It carries out the reaction ATP + H2O + cellular proteinSide 1 = ADP + phosphate + cellular proteinSide 2.. Part of the Sec protein translocase complex. Interacts with the SecYEG preprotein conducting channel. Has a central role in coupling the hydrolysis of ATP to the transfer of proteins into and across the cell membrane, serving as an ATP-driven molecular motor driving the stepwise translocation of polypeptide chains across the membrane. This Streptomyces griseus subsp. griseus (strain JCM 4626 / CBS 651.72 / NBRC 13350 / KCC S-0626 / ISP 5235) protein is Protein translocase subunit SecA.